Reading from the N-terminus, the 298-residue chain is Tyrosine recombinase XerC (298 aa).

Positions 1–84 (MNHIQEAFLN…TLRTFYEYWM (84 aa)) constitute a Core-binding (CB) domain. The 182-residue stretch at 105–286 (YLPQFFYEEE…SNQQLRKVYL (182 aa)) folds into the Tyr recombinase domain. Residues arginine 145, lysine 169, histidine 238, arginine 241, and histidine 264 contribute to the active site. The active-site O-(3'-phospho-DNA)-tyrosine intermediate is tyrosine 273.

The protein belongs to the 'phage' integrase family. XerC subfamily. In terms of assembly, forms a cyclic heterotetrameric complex composed of two molecules of XerC and two molecules of XerD.

The protein resides in the cytoplasm. In terms of biological role, site-specific tyrosine recombinase, which acts by catalyzing the cutting and rejoining of the recombining DNA molecules. The XerC-XerD complex is essential to convert dimers of the bacterial chromosome into monomers to permit their segregation at cell division. It also contributes to the segregational stability of plasmids. The sequence is that of Tyrosine recombinase XerC from Staphylococcus aureus (strain Mu3 / ATCC 700698).